The sequence spans 278 residues: HTH-type transcriptional activator RhaS (278 aa).

One can recognise an HTH araC/xylS-type domain in the interval 174–272 (NQLMAWLEDH…SWSPREIRQG (99 aa)). 2 consecutive DNA-binding regions (H-T-H motif) follow at residues 191–212 (ETVADVFSLSLRTLHRQLKQHT) and 239–262 (VTDIAYRCGFGDSNHFSTLFRREF).

As to quaternary structure, binds DNA as a dimer.

It is found in the cytoplasm. Its function is as follows. Activates expression of the rhaBAD and rhaT operons. This chain is HTH-type transcriptional activator RhaS, found in Enterobacter sp. (strain 638).